Consider the following 235-residue polypeptide: Ribitol-5-phosphate cytidylyltransferase (235 aa).

CTP-binding positions include 7–10, 82–88, and Ser113; these read LAGG and GADRNTS.

The protein belongs to the IspD/TarI cytidylyltransferase family. TarI subfamily.

It carries out the reaction D-ribitol 5-phosphate + CTP + H(+) = CDP-L-ribitol + diphosphate. Its pathway is cell wall biogenesis; poly(ribitol phosphate) teichoic acid biosynthesis. Catalyzes the transfer of the cytidylyl group of CTP to D-ribitol 5-phosphate. The chain is Ribitol-5-phosphate cytidylyltransferase from Streptococcus pneumoniae (strain Hungary19A-6).